We begin with the raw amino-acid sequence, 70 residues long: DNA-directed RNA polymerase subunit omega (70 aa).

This sequence belongs to the RNA polymerase subunit omega family. In terms of assembly, the RNAP catalytic core consists of 2 alpha, 1 beta, 1 beta' and 1 omega subunit. When a sigma factor is associated with the core the holoenzyme is formed, which can initiate transcription.

The enzyme catalyses RNA(n) + a ribonucleoside 5'-triphosphate = RNA(n+1) + diphosphate. Functionally, promotes RNA polymerase assembly. Latches the N- and C-terminal regions of the beta' subunit thereby facilitating its interaction with the beta and alpha subunits. The sequence is that of DNA-directed RNA polymerase subunit omega from Thermoanaerobacter pseudethanolicus (strain ATCC 33223 / 39E) (Clostridium thermohydrosulfuricum).